The chain runs to 316 residues: Pantothenate kinase (316 aa).

Residue 99-106 (GSVAVGKS) coordinates ATP.

It belongs to the prokaryotic pantothenate kinase family.

Its subcellular location is the cytoplasm. It carries out the reaction (R)-pantothenate + ATP = (R)-4'-phosphopantothenate + ADP + H(+). It participates in cofactor biosynthesis; coenzyme A biosynthesis; CoA from (R)-pantothenate: step 1/5. In Pasteurella multocida (strain Pm70), this protein is Pantothenate kinase (coaA).